A 359-amino-acid chain; its full sequence is 5-amino-6-(D-ribitylamino)uracil--L-tyrosine 4-hydroxyphenyl transferase (359 aa).

A Radical SAM core domain is found at 45 to 282; the sequence is VTYVVNANIN…TYAVSRIFFK (238 aa). Residues Cys59, Cys63, and Cys66 each contribute to the [4Fe-4S] cluster site.

Belongs to the radical SAM superfamily. CofH family. In terms of assembly, consists of two subunits, CofG and CofH. The cofactor is [4Fe-4S] cluster.

It catalyses the reaction 5-amino-6-(D-ribitylamino)uracil + L-tyrosine + S-adenosyl-L-methionine = 5-amino-5-(4-hydroxybenzyl)-6-(D-ribitylimino)-5,6-dihydrouracil + 2-iminoacetate + 5'-deoxyadenosine + L-methionine + H(+). It functions in the pathway cofactor biosynthesis; coenzyme F0 biosynthesis. Catalyzes the radical-mediated synthesis of 5-amino-5-(4-hydroxybenzyl)-6-(D-ribitylimino)-5,6-dihydrouracil from 5-amino-6-(D-ribitylamino)uracil and L-tyrosine. The protein is 5-amino-6-(D-ribitylamino)uracil--L-tyrosine 4-hydroxyphenyl transferase of Methanococcus maripaludis (strain C6 / ATCC BAA-1332).